The sequence spans 334 residues: Sulfhydrogenase 2 subunit beta (334 aa).

2 4Fe-4S ferredoxin-type domains span residues 220–250 (KVWK…VCDT) and 294–328 (CKNY…VLDE). The [4Fe-4S] cluster site is built by Cys229, Cys232, Cys235, Cys239, Cys306, Cys309, Cys312, and Cys316.

Dimer of heterotetramer of alpha, beta, gamma and delta subunits. The nickel-containing alpha and delta subunits constitute the hydrogenase activity. The beta and gamma subunits (flavin-containing dimer) constitute the sulfur reductase activity. Requires [4Fe-4S] cluster as cofactor.

Its subcellular location is the cytoplasm. The catalysed reaction is n sulfur + H2 = (n-1) sulfur + hydrogen sulfide + H(+). Its function is as follows. Part of a bifunctional enzyme complex that functions as a hydrogen-evolving hydrogenase with sulfur-reducing activity. May play a role in hydrogen cycling during fermentative growth. Activity exhibited with NAD in addition to NADPH. The beta and gamma subunits form the sulfur-reducing component that catalyzes the cytoplasmic production of hydrogen sulfide in the presence of elemental sulfur. The protein is Sulfhydrogenase 2 subunit beta of Pyrococcus furiosus (strain ATCC 43587 / DSM 3638 / JCM 8422 / Vc1).